The chain runs to 858 residues: DNA mismatch repair protein MutS (858 aa).

602–609 (GPNMSGKS) lines the ATP pocket.

Belongs to the DNA mismatch repair MutS family.

Its function is as follows. This protein is involved in the repair of mismatches in DNA. It is possible that it carries out the mismatch recognition step. This protein has a weak ATPase activity. Overexpression of mutSL partially suppresses the high spontaneous mutation frequency of a ytkD/mutM/mutY triple disruption which lacks the system required to prevent damage by oxidized guanine (8-oxo-dGTP). This suggests that MutSL also functions to repair mismatches due to oxidative stress in both growing and stationary phase cells. In Bacillus subtilis (strain 168), this protein is DNA mismatch repair protein MutS.